The primary structure comprises 591 residues: tRNA 5-methylaminomethyl-2-thiouridine biosynthesis bifunctional protein MnmC (591 aa).

The interval 1 to 232 (MTPTAPSPLV…KRERLEAWRP (232 aa)) is tRNA (mnm(5)s(2)U34)-methyltransferase. The FAD-dependent cmnm(5)s(2)U34 oxidoreductase stretch occupies residues 247–591 (IGGGIAGAAL…FDSPVTRSRL (345 aa)).

The protein in the N-terminal section; belongs to the methyltransferase superfamily. tRNA (mnm(5)s(2)U34)-methyltransferase family. In the C-terminal section; belongs to the DAO family. It depends on FAD as a cofactor.

It is found in the cytoplasm. The catalysed reaction is 5-aminomethyl-2-thiouridine(34) in tRNA + S-adenosyl-L-methionine = 5-methylaminomethyl-2-thiouridine(34) in tRNA + S-adenosyl-L-homocysteine + H(+). Catalyzes the last two steps in the biosynthesis of 5-methylaminomethyl-2-thiouridine (mnm(5)s(2)U) at the wobble position (U34) in tRNA. Catalyzes the FAD-dependent demodification of cmnm(5)s(2)U34 to nm(5)s(2)U34, followed by the transfer of a methyl group from S-adenosyl-L-methionine to nm(5)s(2)U34, to form mnm(5)s(2)U34. This chain is tRNA 5-methylaminomethyl-2-thiouridine biosynthesis bifunctional protein MnmC, found in Caulobacter vibrioides (strain ATCC 19089 / CIP 103742 / CB 15) (Caulobacter crescentus).